The sequence spans 132 residues: Ig kappa chain V-III region MOPC 321 (132 aa).

Positions 1 to 20 (METDTLLLWVLLLWVPGSTG) are cleaved as a signal peptide. The tract at residues 21–43 (DIVLTQSPASLAVSLGQRATISC) is framework-1. A disulfide bond links Cys-43 and Cys-112. The tract at residues 44 to 58 (RASKSVNTYGNSFMZ) is complementarity-determining-1. Positions 59–73 (WYZZKPGZPPKLLIY) are framework-2. The interval 74–80 (RASNLZS) is complementarity-determining-2. Residues 81 to 112 (GIPARFSGSGSRTBFTLTIBPVZABDVATYFC) form a framework-3 region. Residues 113–121 (ZZSBZBPWT) form a complementarity-determining-3 region. The segment at 122–131 (FGSGTKLEIK) is framework-4.

In Mus musculus (Mouse), this protein is Ig kappa chain V-III region MOPC 321.